A 423-amino-acid polypeptide reads, in one-letter code: Serine hydroxymethyltransferase (423 aa).

119–121 contacts (6S)-5,6,7,8-tetrahydrofolate; it reads GHI. Residue Lys225 is modified to N6-(pyridoxal phosphate)lysine.

Belongs to the SHMT family. As to quaternary structure, homodimer. Pyridoxal 5'-phosphate serves as cofactor.

The protein resides in the cytoplasm. The enzyme catalyses (6R)-5,10-methylene-5,6,7,8-tetrahydrofolate + glycine + H2O = (6S)-5,6,7,8-tetrahydrofolate + L-serine. It functions in the pathway one-carbon metabolism; tetrahydrofolate interconversion. Its pathway is amino-acid biosynthesis; glycine biosynthesis; glycine from L-serine: step 1/1. Functionally, catalyzes the reversible interconversion of serine and glycine with tetrahydrofolate (THF) serving as the one-carbon carrier. Also exhibits THF-independent aldolase activity toward beta-hydroxyamino acids, producing glycine and aldehydes, via a retro-aldol mechanism. In Methanocella arvoryzae (strain DSM 22066 / NBRC 105507 / MRE50), this protein is Serine hydroxymethyltransferase.